The primary structure comprises 249 residues: 2,3-bisphosphoglycerate-dependent phosphoglycerate mutase (249 aa).

Substrate is bound by residues arginine 9–asparagine 16, threonine 22–glycine 23, arginine 61, glutamate 88–tyrosine 91, lysine 99, arginine 115–arginine 116, and glycine 184–asparagine 185. The Tele-phosphohistidine intermediate role is filled by histidine 10. The Proton donor/acceptor role is filled by glutamate 88.

Belongs to the phosphoglycerate mutase family. BPG-dependent PGAM subfamily. As to quaternary structure, homodimer.

It carries out the reaction (2R)-2-phosphoglycerate = (2R)-3-phosphoglycerate. It functions in the pathway carbohydrate degradation; glycolysis; pyruvate from D-glyceraldehyde 3-phosphate: step 3/5. Catalyzes the interconversion of 2-phosphoglycerate and 3-phosphoglycerate. This Xanthomonas campestris pv. campestris (strain B100) protein is 2,3-bisphosphoglycerate-dependent phosphoglycerate mutase.